The chain runs to 274 residues: Malonyl-[acyl-carrier protein] O-methyltransferase (274 aa).

Belongs to the methyltransferase superfamily.

The catalysed reaction is malonyl-[ACP] + S-adenosyl-L-methionine = malonyl-[ACP] methyl ester + S-adenosyl-L-homocysteine. It functions in the pathway cofactor biosynthesis; biotin biosynthesis. In terms of biological role, converts the free carboxyl group of a malonyl-thioester to its methyl ester by transfer of a methyl group from S-adenosyl-L-methionine (SAM). It allows to synthesize pimeloyl-ACP via the fatty acid synthetic pathway. This is Malonyl-[acyl-carrier protein] O-methyltransferase from Priestia megaterium (strain DSM 319 / IMG 1521) (Bacillus megaterium).